The primary structure comprises 71 residues: U-scoloptoxin(21)-Sm1a (71 aa).

The N-terminal stretch at 1–21 (MKSVIFALFLVYLLIVRAAEA) is a signal peptide. The disordered stretch occupies residues 45-71 (IELANDPNGPGRRRRAPAENEDFLKHS). A compositionally biased stretch (basic and acidic residues) spans 60 to 71 (APAENEDFLKHS).

Belongs to the scoloptoxin-21 family. Expressed by the venom gland.

The protein resides in the secreted. The protein is U-scoloptoxin(21)-Sm1a of Scolopendra morsitans (Tanzanian blue ringleg centipede).